Here is a 391-residue protein sequence, read N- to C-terminus: Succinate--CoA ligase [ADP-forming] subunit beta (391 aa).

Residues 9–247 form the ATP-grasp domain; the sequence is KDILAKYGVA…IAEEDPLEVE (239 aa). ATP contacts are provided by residues Lys49, 56–58, Glu102, Ala105, and Glu110; that span reads GRG. Mg(2+)-binding residues include Asn202 and Asp216. Substrate contacts are provided by residues Asn267 and 324–326; that span reads GIL.

The protein belongs to the succinate/malate CoA ligase beta subunit family. In terms of assembly, heterotetramer of two alpha and two beta subunits. Mg(2+) is required as a cofactor.

The enzyme catalyses succinate + ATP + CoA = succinyl-CoA + ADP + phosphate. The catalysed reaction is GTP + succinate + CoA = succinyl-CoA + GDP + phosphate. It functions in the pathway carbohydrate metabolism; tricarboxylic acid cycle; succinate from succinyl-CoA (ligase route): step 1/1. Succinyl-CoA synthetase functions in the citric acid cycle (TCA), coupling the hydrolysis of succinyl-CoA to the synthesis of either ATP or GTP and thus represents the only step of substrate-level phosphorylation in the TCA. The beta subunit provides nucleotide specificity of the enzyme and binds the substrate succinate, while the binding sites for coenzyme A and phosphate are found in the alpha subunit. This Acidobacterium capsulatum (strain ATCC 51196 / DSM 11244 / BCRC 80197 / JCM 7670 / NBRC 15755 / NCIMB 13165 / 161) protein is Succinate--CoA ligase [ADP-forming] subunit beta.